A 1002-amino-acid chain; its full sequence is SIT4-associating protein SAP155 (1002 aa).

Disordered regions lie at residues 51–131 (GTSD…APMM), 214–273 (QQQL…ANED), 609–645 (EQLK…ESDY), 868–901 (DNTT…GGGQ), and 940–1002 (NTEN…YDHE). At S58 the chain carries Phosphoserine. Over residues 62–97 (EYSHGDEVKTARGDQKSRFEKDDQQERYEKEEEERS) the composition is skewed to basic and acidic residues. Residues 98-114 (MNSSESSTTSFSSGSTS) are compositionally biased toward low complexity. Residues 220–241 (SSQEDVYVESDTEQEEEKEDDN) are compositionally biased toward acidic residues. A Phosphoserine modification is found at S255. Over residues 262–273 (NNNDDDDDANED) the composition is skewed to acidic residues. The span at 609 to 626 (EQLKTKHSPTRDTDHDLK) shows a compositional bias: basic and acidic residues. Residues T613 and T618 each carry the phosphothreonine modification. Residues 635–645 (DNNDNDDESDY) are compositionally biased toward acidic residues. Positions 868–885 (DNTTVLTPNGDASNNNEI) are enriched in polar residues. Positions 956-976 (SNSNINNTNHNSNNSNNNDNN) are enriched in low complexity. Acidic residues predominate over residues 991–1002 (EDADNDNDYDHE).

It belongs to the SAPS family. In terms of assembly, associates with the SIT4 protein phosphatase catalytic subunit in a cell-cycle-dependent manner. Post-translationally, hyperphosphorylated in the absence of SIT4.

Its subcellular location is the cytoplasm. Positive regulator of protein phosphatase SIT4. Involved in directing expression of TOR-repressed genes and in dephosphorylation of NPR1 in response to nutrient starvation. Negatively modulates K(+) efflux of the cell by the Na(+)-K(+)/H(+) antiporter NHA1. The chain is SIT4-associating protein SAP155 (SAP155) from Saccharomyces cerevisiae (strain ATCC 204508 / S288c) (Baker's yeast).